Here is a 396-residue protein sequence, read N- to C-terminus: Phosphoglycerate kinase (396 aa).

Substrate-binding positions include aspartate 21–asparagine 23, arginine 36, histidine 59–lysine 62, arginine 119, and arginine 156. ATP is bound by residues lysine 206, glycine 294, glutamate 325, and glycine 352–serine 355.

This sequence belongs to the phosphoglycerate kinase family. In terms of assembly, monomer.

It localises to the cytoplasm. It catalyses the reaction (2R)-3-phosphoglycerate + ATP = (2R)-3-phospho-glyceroyl phosphate + ADP. It participates in carbohydrate degradation; glycolysis; pyruvate from D-glyceraldehyde 3-phosphate: step 2/5. In Listeria welshimeri serovar 6b (strain ATCC 35897 / DSM 20650 / CCUG 15529 / CIP 8149 / NCTC 11857 / SLCC 5334 / V8), this protein is Phosphoglycerate kinase.